The primary structure comprises 1236 residues: Complement factor H (1236 aa).

Residues 1–18 form the signal peptide; sequence MRFPAKIVWLVLWTVCVA. Sushi domains are found at residues 19 to 82, 83 to 143, 144 to 207, 208 to 264, 265 to 322, 325 to 383, 385 to 442, 444 to 505, 507 to 562, 565 to 623, 627 to 685, 688 to 745, 750 to 804, 809 to 866, 868 to 936, 937 to 994, 995 to 1053, 1054 to 1111, 1114 to 1172, and 1173 to 1235; these read EDCK…ICRK, KPCA…ICEV, VKCL…KCVE, IFCK…TCIE, ITCD…RCAW, CSYP…EEPC, RQCI…RCIR, KTCS…VCIK, CDRP…KAAC, RECS…TCKV, KSCA…VCIE, RTCG…QCIA, RKCK…DCNE, QLCP…RCIE, IGCS…QCVG, LPCG…DCIS, TNCV…ACRD, VSCG…QCKD, GKCG…KCLE, and ACVI…YPRC. Cystine bridges form between Cys21–Cys66, Cys52–Cys80, Cys85–Cys129, Cys114–Cys141, Cys146–Cys192, Cys178–Cys205, Cys210–Cys251, Cys237–Cys262, Cys267–Cys309, Cys294–Cys320, Cys325–Cys372, Cys355–Cys383, Cys387–Cys429, Cys414–Cys440, Cys446–Cys492, Cys475–Cys503, Cys507–Cys551, Cys534–Cys562, Cys567–Cys609, Cys595–Cys621, Cys629–Cys672, Cys658–Cys683, Cys690–Cys732, Cys718–Cys743, Cys752–Cys791, Cys780–Cys802, Cys811–Cys853, Cys839–Cys864, Cys870–Cys923, Cys909–Cys934, Cys939–Cys981, Cys967–Cys992, Cys997–Cys1040, Cys1026–Cys1051, Cys1056–Cys1098, Cys1084–Cys1109, Cys1116–Cys1159, Cys1145–Cys1170, Cys1174–Cys1225, and Cys1208–Cys1235. Sulfotyrosine is present on residues Tyr168 and Tyr170. Sulfotyrosine occurs at positions 465 and 473. Sulfotyrosine occurs at positions 575, 579, and 585. Asn775 is a glycosylation site (N-linked (GlcNAc...) asparagine). N-linked (GlcNAc...) asparagine glycosylation occurs at Asn1100.

Homodimer. Also forms homooligomers. Interacts with complement protein C3b; this interaction inhibits complement activation. Interacts with complement protein C3d. Interacts with CR3/ITGAM; this interaction mediates adhesion of neutrophils to pathogens leading to pathogen clearance. Post-translationally, sulfated on tyrosine residues. In terms of tissue distribution, CFH is one of the most abundant complement components in blood where the liver is the major source of CFH protein in vivo. in addition, CFH is secreted by additional cell types including monocytes, fibroblasts, or endothelial cells.

Its subcellular location is the secreted. Its function is as follows. Glycoprotein that plays an essential role in maintaining a well-balanced immune response by modulating complement activation. Acts as a soluble inhibitor of complement, where its binding to self markers such as glycan structures prevents complement activation and amplification on cell surfaces. Accelerates the decay of the complement alternative pathway (AP) C3 convertase C3bBb, thus preventing local formation of more C3b, the central player of the complement amplification loop. As a cofactor of the serine protease factor I, CFH also regulates proteolytic degradation of already-deposited C3b. In addition, mediates several cellular responses through interaction with specific receptors. For example, interacts with CR3/ITGAM receptor and thereby mediates the adhesion of human neutrophils to different pathogens. In turn, these pathogens are phagocytosed and destroyed. The sequence is that of Complement factor H (CFH) from Bos taurus (Bovine).